We begin with the raw amino-acid sequence, 447 residues long: Serine/threonine-protein phosphatase 2A 55 kDa regulatory subunit B delta isoform (447 aa).

WD repeat units lie at residues 26-65 (AEAD…KNRP), 91-132 (EIEE…KRAE), 175-213 (AHTY…RSFN), 224-264 (ELTE…LCDR), 283-321 (EIIS…RPVE), 338-379 (ENDC…DITL), and 414-447 (DFNK…DKMN).

It belongs to the phosphatase 2A regulatory subunit B family. In terms of assembly, PP2A consists of a common heterodimeric core enzyme, composed of a 36 kDa catalytic subunit (subunit C) and a 65 kDa constant regulatory subunit (PR65 or subunit A), that associates with a variety of regulatory subunits.

The protein localises to the cytoplasm. Substrate-recognition subunit of protein phosphatase 2A (PP2A) that plays a key role in cell cycle by controlling mitosis entry and exit. The activity of PP2A complexes containing PPP2R2D (PR55-delta) fluctuate during the cell cycle: the activity is high in interphase and low in mitosis. The polypeptide is Serine/threonine-protein phosphatase 2A 55 kDa regulatory subunit B delta isoform (ppp2r2d) (Danio rerio (Zebrafish)).